The sequence spans 62 residues: MRITYKKSSIGYSQAQKDTVRSLGLRKLNQVVELPDTPVVRGMIFKIKHLVTVEEVTATEAK.

This sequence belongs to the universal ribosomal protein uL30 family. In terms of assembly, part of the 50S ribosomal subunit.

This is Large ribosomal subunit protein uL30 from Herpetosiphon aurantiacus (strain ATCC 23779 / DSM 785 / 114-95).